We begin with the raw amino-acid sequence, 431 residues long: ABSCISIC ACID-INSENSITIVE 5-like protein 7 (431 aa).

The tract at residues Met-1–Gly-29 is disordered. Gly residues predominate over residues Leu-10–Gly-20. Phosphoserine is present on residues Ser-39 and Ser-61. Phosphoserine; by CPK32 is present on Ser-110. A disordered region spans residues Asp-133 to Gln-153. The residue at position 155 (Thr-155) is a Phosphothreonine. Residues Ser-319–Ser-331 show a composition bias toward polar residues. A disordered region spans residues Ser-319–Asn-338. Positions Gly-340–Leu-347 match the Nuclear localization signal motif. The 64-residue stretch at Ile-351–Arg-414 folds into the bZIP domain. A basic motif region spans residues Arg-353 to Lys-372. Residues Lys-372–Thr-411 are a coiled coil. The leucine-zipper stretch occupies residues Leu-379–Leu-393.

This sequence belongs to the bZIP family. ABI5 subfamily. As to quaternary structure, DNA-binding heterodimer. Interacts with CPK32 and the AFP proteins AFP1, AFP2 and AFP3. Interacts with FREE1 (via C-terminus). In terms of processing, phosphorylated by CPK4 and CPK11 in vitro. Expressed in roots, leaves, flowers and immatures siliques.

Its subcellular location is the nucleus. Its function is as follows. Functions as a transcriptional activator in the ABA-inducible expression of LTI65/RD29B (AC Q04980). Binds specifically to the ABA-responsive element (ABRE) of the LTI65/RD29B (AC Q04980) gene promoter. Binds to the promoter of FREE1 and activates its transcription. This chain is ABSCISIC ACID-INSENSITIVE 5-like protein 7, found in Arabidopsis thaliana (Mouse-ear cress).